The chain runs to 203 residues: Small ribosomal subunit protein uS4 (203 aa).

The region spanning 93 to 173 (RRLDNVVFRS…FPSWIQVDKA (81 aa)) is the S4 RNA-binding domain.

This sequence belongs to the universal ribosomal protein uS4 family. In terms of assembly, part of the 30S ribosomal subunit. Contacts protein S5. The interaction surface between S4 and S5 is involved in control of translational fidelity.

In terms of biological role, one of the primary rRNA binding proteins, it binds directly to 16S rRNA where it nucleates assembly of the body of the 30S subunit. Its function is as follows. With S5 and S12 plays an important role in translational accuracy. The chain is Small ribosomal subunit protein uS4 from Chlorobium limicola (strain DSM 245 / NBRC 103803 / 6330).